The primary structure comprises 259 residues: Dolichol-phosphate mannosyltransferase subunit 1 (259 aa).

A2 bears the N-acetylalanine mark. S3 is subject to Phosphoserine. Residues P31, Y33, E35, I62, D64, D117, A118, D119, R146, R233, and K239 each coordinate GDP-alpha-D-mannose. D119 is a binding site for Mg(2+). A Mn(2+)-binding site is contributed by D119.

The protein belongs to the glycosyltransferase 2 family. In terms of assembly, component of the dolichol-phosphate mannose (DPM) synthase complex composed of DPM1, DPM2 and DPM3; within the complex, directly interacts with DPM3. This interaction may stabilize DPM1. Mg(2+) serves as cofactor. Requires Mn(2+) as cofactor. It depends on Ca(2+) as a cofactor.

The protein localises to the endoplasmic reticulum. The enzyme catalyses a di-trans,poly-cis-dolichyl phosphate + GDP-alpha-D-mannose = a di-trans,poly-cis-dolichyl beta-D-mannosyl phosphate + GDP. The protein operates within protein modification; protein glycosylation. Its function is as follows. Transfers mannose from GDP-mannose to dolichol monophosphate to form dolichol phosphate mannose (Dol-P-Man) which is the mannosyl donor in pathways leading to N-glycosylation, glycosyl phosphatidylinositol membrane anchoring, and O-mannosylation of proteins; catalytic subunit of the dolichol-phosphate mannose (DPM) synthase complex. In Sus scrofa (Pig), this protein is Dolichol-phosphate mannosyltransferase subunit 1 (DPM1).